The chain runs to 156 residues: MSGHGAPTTDATTLDASTLRVAVVAASWHTTIMDGLLDGARRALADARAGHVVQVRVPGSFELPVAASRLAGDVDAVVALGVVVRGGTPHFDYVCHAATSGLTEVSVRTGTPVGFGLLTCDTEEQGLDRAGLEGSHEDKGYEAAHAALSTALTLGY.

5-amino-6-(D-ribitylamino)uracil is bound by residues tryptophan 28, serine 60–glutamate 62, and valine 82–valine 84. Glycine 87 to threonine 88 contacts (2S)-2-hydroxy-3-oxobutyl phosphate. Histidine 90 acts as the Proton donor in catalysis. Phenylalanine 115 lines the 5-amino-6-(D-ribitylamino)uracil pocket. Residue arginine 129 coordinates (2S)-2-hydroxy-3-oxobutyl phosphate.

It belongs to the DMRL synthase family.

It carries out the reaction (2S)-2-hydroxy-3-oxobutyl phosphate + 5-amino-6-(D-ribitylamino)uracil = 6,7-dimethyl-8-(1-D-ribityl)lumazine + phosphate + 2 H2O + H(+). The protein operates within cofactor biosynthesis; riboflavin biosynthesis; riboflavin from 2-hydroxy-3-oxobutyl phosphate and 5-amino-6-(D-ribitylamino)uracil: step 1/2. Its function is as follows. Catalyzes the formation of 6,7-dimethyl-8-ribityllumazine by condensation of 5-amino-6-(D-ribitylamino)uracil with 3,4-dihydroxy-2-butanone 4-phosphate. This is the penultimate step in the biosynthesis of riboflavin. The sequence is that of 6,7-dimethyl-8-ribityllumazine synthase from Kocuria rhizophila (strain ATCC 9341 / DSM 348 / NBRC 103217 / DC2201).